A 172-amino-acid chain; its full sequence is Shikimate kinase (172 aa).

14 to 19 (GAGKST) lines the ATP pocket. Ser-18 serves as a coordination point for Mg(2+). The substrate site is built by Asp-36, Arg-60, and Gly-82. Residue Arg-120 coordinates ATP. Arg-139 serves as a coordination point for substrate. Gln-156 is a binding site for ATP.

It belongs to the shikimate kinase family. In terms of assembly, monomer. Mg(2+) serves as cofactor.

Its subcellular location is the cytoplasm. It catalyses the reaction shikimate + ATP = 3-phosphoshikimate + ADP + H(+). The protein operates within metabolic intermediate biosynthesis; chorismate biosynthesis; chorismate from D-erythrose 4-phosphate and phosphoenolpyruvate: step 5/7. In terms of biological role, catalyzes the specific phosphorylation of the 3-hydroxyl group of shikimic acid using ATP as a cosubstrate. The polypeptide is Shikimate kinase (Vibrio campbellii (strain ATCC BAA-1116)).